A 190-amino-acid polypeptide reads, in one-letter code: Biphenyl-2,3-diol 1,2-dioxygenase 3 (190 aa).

In terms of domain architecture, VOC spans 6–125; sequence RLAHFVLQTN…DGNMVELQID (120 aa). Fe cation-binding residues include histidine 9, histidine 73, and glutamate 121.

This sequence belongs to the extradiol ring-cleavage dioxygenase family. In terms of assembly, homohexamer. Fe(2+) serves as cofactor.

It carries out the reaction biphenyl-2,3-diol + O2 = 2-hydroxy-6-oxo-6-phenylhexa-2,4-dienoate + H(+). Its pathway is xenobiotic degradation; biphenyl degradation; 2-hydroxy-2,4-pentadienoate and benzoate from biphenyl: step 3/4. The polypeptide is Biphenyl-2,3-diol 1,2-dioxygenase 3 (bphC3) (Rhodococcus globerulus).